The chain runs to 230 residues: ATP synthase subunit a (230 aa).

6 consecutive transmembrane segments (helical) span residues 16-36 (LVLFIPMTLTAVFLNLSWLSI), 73-93 (WVSAFTAIFILIFSINVLGLL), 106-126 (TYSIGVPLWMSVNILGFYLAF), 142-162 (LIPFMVIIETISLFAQPIALG), 165-185 (LAANLTAGHLLIFLLSTAIWT), and 192-212 (IASITLLIFFFLFLLEIGVAC).

It belongs to the ATPase A chain family. F-type ATPases have 2 components, CF(1) - the catalytic core - and CF(0) - the membrane proton channel. CF(1) has five subunits: alpha(3), beta(3), gamma(1), delta(1), epsilon(1). CF(0) has three main subunits: a, b and c.

It is found in the mitochondrion inner membrane. Mitochondrial membrane ATP synthase (F(1)F(0) ATP synthase or Complex V) produces ATP from ADP in the presence of a proton gradient across the membrane which is generated by electron transport complexes of the respiratory chain. F-type ATPases consist of two structural domains, F(1) - containing the extramembraneous catalytic core and F(0) - containing the membrane proton channel, linked together by a central stalk and a peripheral stalk. During catalysis, ATP synthesis in the catalytic domain of F(1) is coupled via a rotary mechanism of the central stalk subunits to proton translocation. Key component of the proton channel; it may play a direct role in the translocation of protons across the membrane. The sequence is that of ATP synthase subunit a (ATP6) from Patiria pectinifera (Starfish).